Here is a 263-residue protein sequence, read N- to C-terminus: Phosphate import ATP-binding protein PstB (263 aa).

The ABC transporter domain occupies 17-258 (ISVKNLDFFY…PKRKETEDYI (242 aa)). Residue 49-56 (GPSGCGKS) coordinates ATP.

Belongs to the ABC transporter superfamily. Phosphate importer (TC 3.A.1.7) family. In terms of assembly, the complex is composed of two ATP-binding proteins (PstB), two transmembrane proteins (PstC and PstA) and a solute-binding protein (PstS).

It is found in the cell inner membrane. It catalyses the reaction phosphate(out) + ATP + H2O = ADP + 2 phosphate(in) + H(+). In terms of biological role, part of the ABC transporter complex PstSACB involved in phosphate import. Responsible for energy coupling to the transport system. The chain is Phosphate import ATP-binding protein PstB from Polaromonas sp. (strain JS666 / ATCC BAA-500).